A 100-amino-acid polypeptide reads, in one-letter code: Large ribosomal subunit protein bL21 (100 aa).

This sequence belongs to the bacterial ribosomal protein bL21 family. As to quaternary structure, part of the 50S ribosomal subunit. Contacts protein L20.

Functionally, this protein binds to 23S rRNA in the presence of protein L20. In Rhodospirillum rubrum (strain ATCC 11170 / ATH 1.1.1 / DSM 467 / LMG 4362 / NCIMB 8255 / S1), this protein is Large ribosomal subunit protein bL21.